Reading from the N-terminus, the 141-residue chain is uncharacterized protein (141 aa).

This is an uncharacterized protein from Escherichia coli (strain K12).